A 153-amino-acid polypeptide reads, in one-letter code: Aspartate carbamoyltransferase regulatory chain (153 aa).

Positions 109, 114, 138, and 141 each coordinate Zn(2+).

This sequence belongs to the PyrI family. As to quaternary structure, contains catalytic and regulatory chains. The cofactor is Zn(2+).

In terms of biological role, involved in allosteric regulation of aspartate carbamoyltransferase. The chain is Aspartate carbamoyltransferase regulatory chain from Shigella dysenteriae serotype 1 (strain Sd197).